Consider the following 360-residue polypeptide: 3-isopropylmalate dehydrogenase (360 aa).

76–89 (GPKWDTIERDIRPE) lines the NAD(+) pocket. Residues Arg-96, Arg-106, Arg-134, and Asp-224 each contribute to the substrate site. Mg(2+)-binding residues include Asp-224, Asp-248, and Asp-252. 282 to 294 (GSAPDIAGKGIAN) is a binding site for NAD(+).

The protein belongs to the isocitrate and isopropylmalate dehydrogenases family. LeuB type 1 subfamily. In terms of assembly, homodimer. Mg(2+) serves as cofactor. It depends on Mn(2+) as a cofactor.

The protein localises to the cytoplasm. The catalysed reaction is (2R,3S)-3-isopropylmalate + NAD(+) = 4-methyl-2-oxopentanoate + CO2 + NADH. It participates in amino-acid biosynthesis; L-leucine biosynthesis; L-leucine from 3-methyl-2-oxobutanoate: step 3/4. Functionally, catalyzes the oxidation of 3-carboxy-2-hydroxy-4-methylpentanoate (3-isopropylmalate) to 3-carboxy-4-methyl-2-oxopentanoate. The product decarboxylates to 4-methyl-2 oxopentanoate. This chain is 3-isopropylmalate dehydrogenase, found in Pseudomonas savastanoi pv. phaseolicola (strain 1448A / Race 6) (Pseudomonas syringae pv. phaseolicola (strain 1448A / Race 6)).